A 693-amino-acid chain; its full sequence is Glycine--tRNA ligase beta subunit (693 aa).

The protein belongs to the class-II aminoacyl-tRNA synthetase family. In terms of assembly, tetramer of two alpha and two beta subunits.

It localises to the cytoplasm. The enzyme catalyses tRNA(Gly) + glycine + ATP = glycyl-tRNA(Gly) + AMP + diphosphate. This is Glycine--tRNA ligase beta subunit from Ligilactobacillus salivarius (strain UCC118) (Lactobacillus salivarius).